A 179-amino-acid polypeptide reads, in one-letter code: ATP synthase subunit b, chloroplastic (179 aa).

A helical transmembrane segment spans residues 28–46; it reads LLNILALVAILVYTGKDFL.

It belongs to the ATPase B chain family. As to quaternary structure, F-type ATPases have 2 components, F(1) - the catalytic core - and F(0) - the membrane proton channel. F(1) has five subunits: alpha(3), beta(3), gamma(1), delta(1), epsilon(1). F(0) has four main subunits: a(1), b(1), b'(1) and c(10-14). The alpha and beta chains form an alternating ring which encloses part of the gamma chain. F(1) is attached to F(0) by a central stalk formed by the gamma and epsilon chains, while a peripheral stalk is formed by the delta, b and b' chains.

The protein localises to the plastid. It localises to the chloroplast thylakoid membrane. F(1)F(0) ATP synthase produces ATP from ADP in the presence of a proton or sodium gradient. F-type ATPases consist of two structural domains, F(1) containing the extramembraneous catalytic core and F(0) containing the membrane proton channel, linked together by a central stalk and a peripheral stalk. During catalysis, ATP synthesis in the catalytic domain of F(1) is coupled via a rotary mechanism of the central stalk subunits to proton translocation. Functionally, component of the F(0) channel, it forms part of the peripheral stalk, linking F(1) to F(0). This Thalassiosira pseudonana (Marine diatom) protein is ATP synthase subunit b, chloroplastic.